We begin with the raw amino-acid sequence, 733 residues long: Microtubule-associated protein tau (733 aa).

Positions 1–16 (MADPRQEFDTMEDHAG) are enriched in basic and acidic residues. A disordered region spans residues 1–548 (MADPRQEFDT…PVPMPDLKNV (548 aa)). Residue A2 is modified to N-acetylalanine. At Y18 the chain carries Phosphotyrosine; by FYN. Residue K33 forms a Glycyl lysine isopeptide (Lys-Gly) (interchain with G-Cter in ubiquitin) linkage. A phosphoserine mark is found at S35 and S50. Over residues 50-60 (SETSDAKSTPT) the composition is skewed to polar residues. A phosphothreonine mark is found at T58, T60, and T100. R115 bears the Omega-N-methylarginine mark. A compositionally biased stretch (polar residues) spans 126–137 (SDWTRQQVSSMS). Basic and acidic residues predominate over residues 157–172 (RPEDIEKSHPASELLR). A Phosphoserine modification is found at S188. Acidic residues predominate over residues 189 to 202 (EEEVDEDLTVDESS). The span at 203–212 (QDSPPSQASL) shows a compositional bias: polar residues. Basic and acidic residues-rich tracts occupy residues 270–294 (EEGH…KEQD) and 354–366 (ASKD…EKKA). A compositionally biased stretch (polar residues) spans 413–427 (KHVSSVTPRNGSPGT). T445 carries the post-translational modification Phosphothreonine. R447 bears the Omega-N-methylarginine mark. S451 carries the phosphoserine modification. K455 is modified (N6,N6-dimethyllysine; alternate). N6-acetyllysine; alternate is present on K455. Phosphothreonine is present on residues T461, T467, and T468. Position 470 is a phosphoserine (S470). The residue at position 473 (T473) is a Phosphothreonine. A phosphoserine mark is found at S477, S483, and S487. A compositionally biased stretch (low complexity) spans 479–506 (EPPKSGERSGYSSPGSPGTPGSRSRTPS). Residue Y489 is modified to Phosphotyrosine. Phosphoserine is present on residues S490, S491, and S494. Residues T497 and T504 each carry the phosphothreonine modification. Phosphoserine is present on S506. T509 is subject to Phosphothreonine. An N6-acetyllysine modification is found at K517. The residue at position 523 (T523) is a Phosphothreonine. A phosphoserine mark is found at S527, S529, and S531. 4 Tau/MAP repeats span residues 536–566 (QTAP…GGGK), 567–597 (VQII…GGGS), 598–628 (VQIV…GGGQ), and 629–660 (VEVK…GGGN). Residue K546 forms a Glycyl lysine isopeptide (Lys-Gly) (interchain with G-Cter in ubiquitin) linkage. N6-acetyllysine; alternate is present on K551. K551 is subject to N6-methyllysine; alternate. K551 is covalently cross-linked (Glycyl lysine isopeptide (Lys-Gly) (interchain with G-Cter in ubiquitin); alternate). S554 is subject to Phosphoserine; by MARK1, BRSK1, BRSK2 and PHK. Residue K559 forms a Glycyl lysine isopeptide (Lys-Gly) (interchain with G-Cter in ubiquitin) linkage. Residue K573 is modified to N6-acetyllysine; alternate. K573 is covalently cross-linked (Glycyl lysine isopeptide (Lys-Gly) (interchain with G-Cter in ubiquitin); alternate). A phosphoserine mark is found at S577 and S581. K582 carries the post-translational modification N6-acetyllysine. A disulfide bridge links C583 with C614. Phosphoserine is present on S585. K590 carries the N6-acetyllysine; alternate modification. K590 participates in a covalent cross-link: Glycyl lysine isopeptide (Lys-Gly) (interchain with G-Cter in ubiquitin); alternate. S597 carries the phosphoserine modification. An N6,N6-dimethyllysine; alternate modification is found at K603. 3 positions are modified to N6-acetyllysine; alternate: K603, K609, and K613. Glycyl lysine isopeptide (Lys-Gly) (interchain with G-Cter in ubiquitin); alternate cross-links involve residues K603, K609, and K613. S616 carries the phosphoserine modification. N6-acetyllysine; alternate is present on residues K623, K635, and K639. Glycyl lysine isopeptide (Lys-Gly) (interchain with G-Cter in ubiquitin); alternate cross-links involve residues K623, K635, and K639. R641 bears the Omega-N-methylarginine mark. Residue S644 is modified to Phosphoserine. A Glycyl lysine isopeptide (Lys-Gly) (interchain with G-Cter in ubiquitin) cross-link involves residue K645. A Phosphoserine modification is found at S648. K661 is subject to N6-acetyllysine; alternate. Residue K661 forms a Glycyl lysine isopeptide (Lys-Gly) (interchain with G-Cter in ubiquitin); alternate linkage. K667 participates in a covalent cross-link: Glycyl lysine isopeptide (Lys-Gly) (interchain with G-Cter in ubiquitin). N6-acetyllysine; alternate is present on K677. A Glycyl lysine isopeptide (Lys-Gly) (interchain with G-Cter in ubiquitin); alternate cross-link involves residue K677. The residue at position 686 (Y686) is a Phosphotyrosine. S688 carries the post-translational modification Phosphoserine. A disordered region spans residues 690–709 (VVSGDTSPRHLSNVSSTGSI). Residue S692 is modified to Phosphoserine; alternate. An O-linked (GlcNAc...) serine; alternate glycan is attached at S692. Over residues 693–708 (GDTSPRHLSNVSSTGS) the composition is skewed to polar residues. The residue at position 695 (T695) is a Phosphothreonine. Residues S696, S701, S708, and S714 each carry the phosphoserine modification. T719 bears the Phosphothreonine mark.

As to quaternary structure, interacts with MARK1, MARK2, MARK3 and MARK4. Interacts with SQSTM1 when polyubiquitinated. Interacts with PSMC2 through SQSTM1. Interacts with FKBP4. Binds to CSNK1D. Interacts with SGK1. Interacts with EPM2A; the interaction dephosphorylates MAPT at Ser-369. Interacts with PIN1. Interacts with LRRK2. Interacts with LRP1, leading to endocytosis; this interaction is reduced in the presence of LRPAP1/RAP. Post-translationally, polyubiquitinated. Requires functional TRAF6 and may provoke SQSTM1-dependent degradation by the proteasome. Phosphorylation at various serine and threonine residues in S-P or T-P motifs by proline-directed protein kinases (PDPK1, CDK1, CDK5, GSK3, MAPK) (a few sites per protein in interphase, more in mitosis), and at serine residues in K-X-G-S motifs by MAP/microtubule affinity-regulating kinase (MARK1, MARK2, MARK3, MARK4), causing detachment from microtubules, and their disassembly. Phosphorylated by PHK. Dephosphorylation at several serine and threonine residues by the serine/threonine phosphatase PPP5C. Phosphorylation at Ser-554 by BRSK1 and BRSK2 in neurons affects ability to bind microtubules and plays a role in neuron polarization. Phosphorylation at Ser-188 by SGK1 mediates microtubule depolymerization and neurite formation in hippocampal neurons. Expressed in neurons and at a lower level in the liver and kidney. Isoform PNS-tau is expressed in the peripheral nervous system while the others are expressed in the central nervous system.

The protein resides in the cytoplasm. It localises to the cytosol. Its subcellular location is the cell membrane. It is found in the cytoskeleton. The protein localises to the cell projection. The protein resides in the axon. It localises to the dendrite. Its subcellular location is the secreted. Its function is as follows. Promotes microtubule assembly and stability, and might be involved in the establishment and maintenance of neuronal polarity. The C-terminus binds axonal microtubules while the N-terminus binds neural plasma membrane components, suggesting that tau functions as a linker protein between both. Axonal polarity is predetermined by tau localization (in the neuronal cell) in the domain of the cell body defined by the centrosome. The short isoforms allow plasticity of the cytoskeleton whereas the longer isoforms may preferentially play a role in its stabilization. The polypeptide is Microtubule-associated protein tau (Mus musculus (Mouse)).